Consider the following 459-residue polypeptide: GTPase Der (459 aa).

EngA-type G domains follow at residues 4-169 and 179-355; these read PLVA…PEVT and IAVS…AAHR. Residues 10–17, 57–61, 120–123, 185–192, 232–236, and 297–300 each bind GTP; these read GRPNVGKS, DTGGL, NKCE, DTAGI, and NKWD. The 86-residue stretch at 356 to 441 folds into the KH-like domain; sequence KRVPTAVVNE…PIRFLWRGKS (86 aa).

This sequence belongs to the TRAFAC class TrmE-Era-EngA-EngB-Septin-like GTPase superfamily. EngA (Der) GTPase family. Associates with the 50S ribosomal subunit.

GTPase that plays an essential role in the late steps of ribosome biogenesis. The sequence is that of GTPase Der from Synechococcus sp. (strain JA-2-3B'a(2-13)) (Cyanobacteria bacterium Yellowstone B-Prime).